The primary structure comprises 373 residues: Thyroid hormone receptor beta-A (373 aa).

The modulating stretch occupies residues 1-18; the sequence is MPSSMSGYIPSYLDKDEL. 2 consecutive NR C4-type zinc fingers follow at residues 19–39 and 57–81; these read CVVC…CEGC and CKYE…FKKC. Residues 19-93 constitute a DNA-binding region (nuclear receptor); it reads CVVCGDKATG…VGMATDLVLD (75 aa). Residues 129 to 373 form the NR LBD domain; it reads EEWELIQVVT…PPLFLEVFED (245 aa).

Belongs to the nuclear hormone receptor family. NR1 subfamily.

It localises to the nucleus. High affinity receptor for triiodothyronine (T3). The chain is Thyroid hormone receptor beta-A (thrb-a) from Xenopus laevis (African clawed frog).